Reading from the N-terminus, the 317-residue chain is MGEVQREKVAVIIGPTAVGKTKLSIDLAKALNGEIISGDSMQIYRTMDIGTAKVTKEEMDGIPHYMVDIKNPEESFSVAEFQERVRKHIREITERGKLPIIVGGTGLYIQSVLFDYQFTDDAGDAIYREQMEKLALERGVEYVHKKLQEVDPESAERIHANNVRRVIRALEIFHTSGEKMSDQLEKQENELLYDVSLIGLTMDREMLYDRINLRVDIMMDQGLLEEVEGLYNRGIRDCQSIQAIGYKEIYDYFEDRVSLEEAVSQLKTNSRRYAKRQLTWFRNKMDVTWFDVTDGEKTSEILRYIEGKLQLKSNNSK.

An ATP-binding site is contributed by 14 to 21; sequence GPTAVGKT. 16–21 contacts substrate; sequence TAVGKT. The interaction with substrate tRNA stretch occupies residues 39–42; that stretch reads DSMQ.

Belongs to the IPP transferase family. As to quaternary structure, monomer. Mg(2+) is required as a cofactor.

It catalyses the reaction adenosine(37) in tRNA + dimethylallyl diphosphate = N(6)-dimethylallyladenosine(37) in tRNA + diphosphate. Catalyzes the transfer of a dimethylallyl group onto the adenine at position 37 in tRNAs that read codons beginning with uridine, leading to the formation of N6-(dimethylallyl)adenosine (i(6)A). The polypeptide is tRNA dimethylallyltransferase (Bacillus thuringiensis subsp. konkukian (strain 97-27)).